A 139-amino-acid polypeptide reads, in one-letter code: Succinate dehydrogenase assembly factor 2, mitochondrial (139 aa).

The N-terminal 28 residues, 1–28 (MLRKTNLSNITTLLRSARCMNRMPQLRF), are a transit peptide targeting the mitochondrion.

This sequence belongs to the SDHAF2 family. As to quaternary structure, interacts with the flavoprotein subunit within the SDH catalytic dimer.

It localises to the mitochondrion. Its subcellular location is the mitochondrion matrix. Plays an essential role in the assembly of succinate dehydrogenase (SDH), an enzyme complex (also referred to as respiratory complex II) that is a component of both the tricarboxylic acid (TCA) cycle and the mitochondrial electron transport chain, and which couples the oxidation of succinate to fumarate with the reduction of ubiquinone (coenzyme Q) to ubiquinol. Required for flavinylation (covalent attachment of FAD) of the flavoprotein subunit of the SDH catalytic dimer. In Schizosaccharomyces pombe (strain 972 / ATCC 24843) (Fission yeast), this protein is Succinate dehydrogenase assembly factor 2, mitochondrial.